The sequence spans 324 residues: HTH-type transcriptional regulator CysB (324 aa).

The HTH lysR-type domain maps to Met1–Val59. A DNA-binding region (H-T-H motif) is located at residues Val19–Arg38.

This sequence belongs to the LysR transcriptional regulatory family. In terms of assembly, homotetramer.

The protein localises to the cytoplasm. Its function is as follows. This protein is a positive regulator of gene expression for the cysteine regulon. The inducer for CysB is N-acetylserine. Thiosulfate and sulfide act as anti-inducers. This chain is HTH-type transcriptional regulator CysB (cysB), found in Klebsiella pneumoniae.